The sequence spans 832 residues: Protein P (832 aa).

The segment at 1-177 (MPLSYQHFRR…FCGSPYSWEQ (177 aa)) is terminal protein domain (TP). A spacer region spans residues 178–335 (ELQHGAESFH…YCLSHIVNLL (158 aa)). The segment at 241-263 (RRPFGVEPSGSGHTTNLASKSAS) is disordered. Residues 251–263 (SGHTTNLASKSAS) show a composition bias toward polar residues. A polymerase/reverse transcriptase domain (RT) region spans residues 336–679 (EDWGPCAEHG…YLNLYPVARQ (344 aa)). Residues 346-589 (EHHIRIPRTP…YSLHFMGYVI (244 aa)) form the Reverse transcriptase domain. Mg(2+) contacts are provided by D418, D540, and D541.

The protein belongs to the hepadnaviridae P protein family.

The enzyme catalyses DNA(n) + a 2'-deoxyribonucleoside 5'-triphosphate = DNA(n+1) + diphosphate. It carries out the reaction Endonucleolytic cleavage to 5'-phosphomonoester.. Activated by host HSP70 and HSP40 in vitro to be able to bind the epsilon loop of the pgRNA. Because deletion of the RNase H region renders the protein partly chaperone-independent, the chaperones may be needed indirectly to relieve occlusion of the RNA-binding site by this domain. Inhibited by several reverse-transcriptase inhibitors: Lamivudine, Adefovir and Entecavir. In terms of biological role, multifunctional enzyme that converts the viral RNA genome into dsDNA in viral cytoplasmic capsids. This enzyme displays a DNA polymerase activity that can copy either DNA or RNA templates, and a ribonuclease H (RNase H) activity that cleaves the RNA strand of RNA-DNA heteroduplexes in a partially processive 3'- to 5'-endonucleasic mode. Neo-synthesized pregenomic RNA (pgRNA) are encapsidated together with the P protein, and reverse-transcribed inside the nucleocapsid. Initiation of reverse-transcription occurs first by binding the epsilon loop on the pgRNA genome, and is initiated by protein priming, thereby the 5'-end of (-)DNA is covalently linked to P protein. Partial (+)DNA is synthesized from the (-)DNA template and generates the relaxed circular DNA (RC-DNA) genome. After budding and infection, the RC-DNA migrates in the nucleus, and is converted into a plasmid-like covalently closed circular DNA (cccDNA). The activity of P protein does not seem to be necessary for cccDNA generation, and is presumably released from (+)DNA by host nuclear DNA repair machinery. The sequence is that of Protein P from Homo sapiens (Human).